The primary structure comprises 222 residues: 7-cyano-7-deazaguanine synthase (222 aa).

ATP is bound at residue 9-19 (ISGGMDSALSA). Residues cysteine 188, cysteine 196, cysteine 199, and cysteine 202 each contribute to the Zn(2+) site.

The protein belongs to the QueC family. Zn(2+) is required as a cofactor.

The enzyme catalyses 7-carboxy-7-deazaguanine + NH4(+) + ATP = 7-cyano-7-deazaguanine + ADP + phosphate + H2O + H(+). It participates in purine metabolism; 7-cyano-7-deazaguanine biosynthesis. Functionally, catalyzes the ATP-dependent conversion of 7-carboxy-7-deazaguanine (CDG) to 7-cyano-7-deazaguanine (preQ(0)). The protein is 7-cyano-7-deazaguanine synthase of Sulfurovum sp. (strain NBC37-1).